The chain runs to 407 residues: Putative glucose/galactose transporter (407 aa).

The next 12 helical transmembrane spans lie at 11 to 31, 47 to 67, 70 to 90, 96 to 116, 139 to 159, 180 to 200, 225 to 245, 263 to 283, 300 to 320, 321 to 341, 349 to 369, and 378 to 398; these read GSLT…DILI, LIQF…GNVI, IGYP…CALF, FGSY…IVCL, VQAF…LLIF, VQMP…IMYL, FVFG…IGSF, HYLV…SVLM, IVLI…ALTF, VGFF…LNLG, GVIS…GAVT, and NLLY…FFAL.

Belongs to the major facilitator superfamily. FHS transporter (TC 2.A.1.7) family.

Its subcellular location is the cell inner membrane. Intake of glucose and galactose. This is Putative glucose/galactose transporter (gluP) from Helicobacter pylori (strain ATCC 700392 / 26695) (Campylobacter pylori).